The sequence spans 445 residues: 3-phosphoshikimate 1-carboxyvinyltransferase (445 aa).

The tract at residues 1–25 is disordered; it reads MSHSDQTSPLEARKSAALSGTARVP. 3 residues coordinate 3-phosphoshikimate: Lys28, Ser29, and Arg33. Lys28 provides a ligand contact to phosphoenolpyruvate. Residues Gly101 and Arg129 each contribute to the phosphoenolpyruvate site. 3-phosphoshikimate contacts are provided by Ser175, Gln177, Asp328, and Lys355. Position 177 (Gln177) interacts with phosphoenolpyruvate. Asp328 acts as the Proton acceptor in catalysis. Phosphoenolpyruvate-binding residues include Arg359 and Arg402.

It belongs to the EPSP synthase family. As to quaternary structure, monomer.

The protein resides in the cytoplasm. It catalyses the reaction 3-phosphoshikimate + phosphoenolpyruvate = 5-O-(1-carboxyvinyl)-3-phosphoshikimate + phosphate. It participates in metabolic intermediate biosynthesis; chorismate biosynthesis; chorismate from D-erythrose 4-phosphate and phosphoenolpyruvate: step 6/7. Functionally, catalyzes the transfer of the enolpyruvyl moiety of phosphoenolpyruvate (PEP) to the 5-hydroxyl of shikimate-3-phosphate (S3P) to produce enolpyruvyl shikimate-3-phosphate and inorganic phosphate. This chain is 3-phosphoshikimate 1-carboxyvinyltransferase, found in Rhodopseudomonas palustris (strain BisB5).